Reading from the N-terminus, the 330-residue chain is Protein pelota homolog (330 aa).

Belongs to the eukaryotic release factor 1 family. Pelota subfamily. As to quaternary structure, monomer. The cofactor is a divalent metal cation.

It is found in the cytoplasm. May function in recognizing stalled ribosomes, interact with stem-loop structures in stalled mRNA molecules, and effect endonucleolytic cleavage of the mRNA. May play a role in the release non-functional ribosomes and degradation of damaged mRNAs. Has endoribonuclease activity. This Pyrobaculum islandicum (strain DSM 4184 / JCM 9189 / GEO3) protein is Protein pelota homolog.